The following is an 87-amino-acid chain: DNA-directed RNA polymerase subunit omega (87 aa).

Belongs to the RNA polymerase subunit omega family. The RNAP catalytic core consists of 2 alpha, 1 beta, 1 beta' and 1 omega subunit. When a sigma factor is associated with the core the holoenzyme is formed, which can initiate transcription.

The catalysed reaction is RNA(n) + a ribonucleoside 5'-triphosphate = RNA(n+1) + diphosphate. Functionally, promotes RNA polymerase assembly. Latches the N- and C-terminal regions of the beta' subunit thereby facilitating its interaction with the beta and alpha subunits. This Pseudomonas fluorescens (strain SBW25) protein is DNA-directed RNA polymerase subunit omega.